Consider the following 295-residue polypeptide: 4-hydroxy-tetrahydrodipicolinate synthase (295 aa).

T46 provides a ligand contact to pyruvate. Y134 functions as the Proton donor/acceptor in the catalytic mechanism. K162 functions as the Schiff-base intermediate with substrate in the catalytic mechanism. I205 contributes to the pyruvate binding site.

Belongs to the DapA family. In terms of assembly, homotetramer; dimer of dimers.

The protein resides in the cytoplasm. The enzyme catalyses L-aspartate 4-semialdehyde + pyruvate = (2S,4S)-4-hydroxy-2,3,4,5-tetrahydrodipicolinate + H2O + H(+). It functions in the pathway amino-acid biosynthesis; L-lysine biosynthesis via DAP pathway; (S)-tetrahydrodipicolinate from L-aspartate: step 3/4. Its function is as follows. Catalyzes the condensation of (S)-aspartate-beta-semialdehyde [(S)-ASA] and pyruvate to 4-hydroxy-tetrahydrodipicolinate (HTPA). The chain is 4-hydroxy-tetrahydrodipicolinate synthase from Anaeromyxobacter dehalogenans (strain 2CP-1 / ATCC BAA-258).